The primary structure comprises 52 residues: Alpha-crystallin B chain (52 aa).

The protein belongs to the small heat shock protein (HSP20) family. Homodimer. Aggregates with homologous proteins, including alpha-A-crystallin and the small heat shock protein HSPB1, to form large heteromeric complexes.

May contribute to the transparency and refractive index of the lens. This Trachemys scripta elegans (Red-eared slider turtle) protein is Alpha-crystallin B chain (CRYAB).